The sequence spans 194 residues: Ion-translocating oxidoreductase complex subunit B (194 aa).

A hydrophobic region spans residues 1–26 (MSGVLIAVAALLALAAVFGAVLGFAS). The region spanning 32-90 (EGDPIVDQIDSLLPQTQCGQCGHPGCRPYAEAIAEGEEHNRCPPGGQDTVVALSELLGR) is the 4Fe-4S domain. 12 residues coordinate [4Fe-4S] cluster: Cys49, Cys52, Cys57, Cys73, Cys116, Cys119, Cys122, Cys126, Cys146, Cys149, Cys152, and Cys156. 2 consecutive 4Fe-4S ferredoxin-type domains span residues 107–136 (KVAY…GAAK) and 137–166 (LMHT…MLEV).

The protein belongs to the 4Fe4S bacterial-type ferredoxin family. RnfB subfamily. In terms of assembly, the complex is composed of six subunits: RnfA, RnfB, RnfC, RnfD, RnfE and RnfG. [4Fe-4S] cluster serves as cofactor.

The protein resides in the cell inner membrane. Its function is as follows. Part of a membrane-bound complex that couples electron transfer with translocation of ions across the membrane. This Alcanivorax borkumensis (strain ATCC 700651 / DSM 11573 / NCIMB 13689 / SK2) protein is Ion-translocating oxidoreductase complex subunit B.